A 96-amino-acid polypeptide reads, in one-letter code: Aspartyl/glutamyl-tRNA(Asn/Gln) amidotransferase subunit C (96 aa).

Belongs to the GatC family. Heterotrimer of A, B and C subunits.

It carries out the reaction L-glutamyl-tRNA(Gln) + L-glutamine + ATP + H2O = L-glutaminyl-tRNA(Gln) + L-glutamate + ADP + phosphate + H(+). It catalyses the reaction L-aspartyl-tRNA(Asn) + L-glutamine + ATP + H2O = L-asparaginyl-tRNA(Asn) + L-glutamate + ADP + phosphate + 2 H(+). Functionally, allows the formation of correctly charged Asn-tRNA(Asn) or Gln-tRNA(Gln) through the transamidation of misacylated Asp-tRNA(Asn) or Glu-tRNA(Gln) in organisms which lack either or both of asparaginyl-tRNA or glutaminyl-tRNA synthetases. The reaction takes place in the presence of glutamine and ATP through an activated phospho-Asp-tRNA(Asn) or phospho-Glu-tRNA(Gln). The protein is Aspartyl/glutamyl-tRNA(Asn/Gln) amidotransferase subunit C of Neisseria gonorrhoeae (strain ATCC 700825 / FA 1090).